Here is a 279-residue protein sequence, read N- to C-terminus: Putative pyruvate, phosphate dikinase regulatory protein (279 aa).

Residue 153–160 (GVSRTSKT) participates in ADP binding.

It belongs to the pyruvate, phosphate/water dikinase regulatory protein family. PDRP subfamily.

The enzyme catalyses N(tele)-phospho-L-histidyl/L-threonyl-[pyruvate, phosphate dikinase] + ADP = N(tele)-phospho-L-histidyl/O-phospho-L-threonyl-[pyruvate, phosphate dikinase] + AMP + H(+). It catalyses the reaction N(tele)-phospho-L-histidyl/O-phospho-L-threonyl-[pyruvate, phosphate dikinase] + phosphate + H(+) = N(tele)-phospho-L-histidyl/L-threonyl-[pyruvate, phosphate dikinase] + diphosphate. Bifunctional serine/threonine kinase and phosphorylase involved in the regulation of the pyruvate, phosphate dikinase (PPDK) by catalyzing its phosphorylation/dephosphorylation. In Bradyrhizobium diazoefficiens (strain JCM 10833 / BCRC 13528 / IAM 13628 / NBRC 14792 / USDA 110), this protein is Putative pyruvate, phosphate dikinase regulatory protein.